The sequence spans 419 residues: Tol-Pal system protein TolB (419 aa).

An N-terminal signal peptide occupies residues Met-1–Ala-19.

The protein belongs to the TolB family. The Tol-Pal system is composed of five core proteins: the inner membrane proteins TolA, TolQ and TolR, the periplasmic protein TolB and the outer membrane protein Pal. They form a network linking the inner and outer membranes and the peptidoglycan layer.

The protein localises to the periplasm. Part of the Tol-Pal system, which plays a role in outer membrane invagination during cell division and is important for maintaining outer membrane integrity. In Legionella pneumophila (strain Paris), this protein is Tol-Pal system protein TolB.